Here is a 20-residue protein sequence, read N- to C-terminus: Hemocyanin subunit Ib (20 aa).

A disordered region spans residues 1 to 20 (DSVGSTTAHKQQNINHLLDK).

It belongs to the tyrosinase family. Hemocyanin subfamily. Composed of 3 major subunits (IB, II and III) and 1 minor subunit (IA) which form homohexamers and heterohexamers. May also form larger structures. As to expression, hemolymph.

Its subcellular location is the secreted. The protein localises to the extracellular space. In terms of biological role, hemocyanins are copper-containing oxygen carriers occurring freely dissolved in the hemolymph of many mollusks and arthropods. The protein is Hemocyanin subunit Ib of Panulirus japonicus (Japanese spiny lobster).